The sequence spans 383 residues: Succinyl-diaminopimelate desuccinylase (383 aa).

Zn(2+) is bound at residue histidine 70. The active site involves aspartate 72. Aspartate 103 is a Zn(2+) binding site. Catalysis depends on glutamate 137, which acts as the Proton acceptor. Positions 138, 166, and 352 each coordinate Zn(2+).

This sequence belongs to the peptidase M20A family. DapE subfamily. Homodimer. Zn(2+) is required as a cofactor. Co(2+) serves as cofactor.

The enzyme catalyses N-succinyl-(2S,6S)-2,6-diaminopimelate + H2O = (2S,6S)-2,6-diaminopimelate + succinate. The protein operates within amino-acid biosynthesis; L-lysine biosynthesis via DAP pathway; LL-2,6-diaminopimelate from (S)-tetrahydrodipicolinate (succinylase route): step 3/3. Its function is as follows. Catalyzes the hydrolysis of N-succinyl-L,L-diaminopimelic acid (SDAP), forming succinate and LL-2,6-diaminopimelate (DAP), an intermediate involved in the bacterial biosynthesis of lysine and meso-diaminopimelic acid, an essential component of bacterial cell walls. This chain is Succinyl-diaminopimelate desuccinylase, found in Hahella chejuensis (strain KCTC 2396).